The primary structure comprises 275 residues: L-aspartate dehydrogenase (275 aa).

NAD(+) is bound by residues alanine 130 and asparagine 196. Histidine 226 is an active-site residue.

It belongs to the L-aspartate dehydrogenase family.

The catalysed reaction is L-aspartate + NADP(+) + H2O = oxaloacetate + NH4(+) + NADPH + H(+). It carries out the reaction L-aspartate + NAD(+) + H2O = oxaloacetate + NH4(+) + NADH + H(+). Its pathway is cofactor biosynthesis; NAD(+) biosynthesis; iminoaspartate from L-aspartate (dehydrogenase route): step 1/1. Its function is as follows. Specifically catalyzes the NAD or NADP-dependent dehydrogenation of L-aspartate to iminoaspartate. This is L-aspartate dehydrogenase from Ruegeria pomeroyi (strain ATCC 700808 / DSM 15171 / DSS-3) (Silicibacter pomeroyi).